Reading from the N-terminus, the 501-residue chain is Lysine--tRNA ligase (501 aa).

Mg(2+) contacts are provided by Glu-411 and Glu-418.

Belongs to the class-II aminoacyl-tRNA synthetase family. Homodimer. The cofactor is Mg(2+).

The protein localises to the cytoplasm. It carries out the reaction tRNA(Lys) + L-lysine + ATP = L-lysyl-tRNA(Lys) + AMP + diphosphate. This Pseudomonas aeruginosa (strain ATCC 15692 / DSM 22644 / CIP 104116 / JCM 14847 / LMG 12228 / 1C / PRS 101 / PAO1) protein is Lysine--tRNA ligase.